Reading from the N-terminus, the 574-residue chain is Sulfate adenylyltransferase (574 aa).

Positions 1-169 (MANPPHGGVL…IEAINKLNHY (169 aa)) are N-terminal. The tract at residues 170 to 394 (DYVALRYTPA…LRESSPPRHT (225 aa)) is catalytic. Glutamine 197 serves as a coordination point for sulfate. ATP contacts are provided by residues 197–200 (QTRN) and 291–294 (GRDH). Catalysis depends on residues threonine 198, arginine 199, and asparagine 200. Residue arginine 199 participates in sulfate binding. Alanine 295 contributes to the sulfate binding site. Residue valine 333 coordinates ATP. Positions 395-574 (QGFTIFLTGY…LETEGFFDRS (180 aa)) are allosteric regulation domain; adenylyl-sulfate kinase-like. 3'-phosphoadenylyl sulfate contacts are provided by residues 434–437 (DTVR), arginine 451, 477–478 (IA), and arginine 516.

The protein in the N-terminal section; belongs to the sulfate adenylyltransferase family. This sequence in the C-terminal section; belongs to the APS kinase family. Homohexamer. Dimer of trimers.

It is found in the cytoplasm. The catalysed reaction is sulfate + ATP + H(+) = adenosine 5'-phosphosulfate + diphosphate. It participates in sulfur metabolism; hydrogen sulfide biosynthesis; sulfite from sulfate: step 1/3. Its activity is regulated as follows. Allosterically inhibited by 3'-phosphoadenosine 5'-phosphosulfate (PAPS). In terms of biological role, catalyzes the first intracellular reaction of sulfate assimilation, forming adenosine-5'-phosphosulfate (APS) from inorganic sulfate and ATP. Plays an important role in sulfate activation as a component of the biosynthesis pathway of sulfur-containing amino acids. In Aspergillus fumigatus (strain ATCC MYA-4609 / CBS 101355 / FGSC A1100 / Af293) (Neosartorya fumigata), this protein is Sulfate adenylyltransferase.